The chain runs to 361 residues: 3-dehydroquinate synthase (361 aa).

NAD(+) contacts are provided by residues Asp71 to Lys76, Gly105 to Asp109, Thr129 to Thr130, Lys142, Lys151, and Cys169 to Thr172. Residues Glu184, His247, and His264 each contribute to the Zn(2+) site.

It belongs to the sugar phosphate cyclases superfamily. Dehydroquinate synthase family. Requires Co(2+) as cofactor. It depends on Zn(2+) as a cofactor. NAD(+) is required as a cofactor.

The protein localises to the cytoplasm. It carries out the reaction 7-phospho-2-dehydro-3-deoxy-D-arabino-heptonate = 3-dehydroquinate + phosphate. It functions in the pathway metabolic intermediate biosynthesis; chorismate biosynthesis; chorismate from D-erythrose 4-phosphate and phosphoenolpyruvate: step 2/7. Catalyzes the conversion of 3-deoxy-D-arabino-heptulosonate 7-phosphate (DAHP) to dehydroquinate (DHQ). The sequence is that of 3-dehydroquinate synthase from Edwardsiella ictaluri (strain 93-146).